The chain runs to 779 residues: Transcription factor SPT20 homolog (779 aa).

Serine 296 bears the Phosphoserine mark. 2 disordered regions span residues 373-392 and 420-507; these read DEESDSQMSPSHSSTDDHSN and PVKM…IPRK. Positions 424–437 are enriched in low complexity; that stretch reads SHSSSGSASLSQVS. Polar residues predominate over residues 445–454; that stretch reads TETVSVQSSV. Positions 470-479 are enriched in low complexity; it reads SSSGNSSSGN. Phosphothreonine is present on threonine 494. Serine 519 and serine 524 each carry phosphoserine. Disordered stretches follow at residues 641–677 and 755–779; these read QLSQFTPQQPQQPTTCSPQQPGEQGSEQGSTSQEQAL and LHHHRHTGSQSKSKMKRGTPTTPKF. Over residues 755 to 771 the composition is skewed to basic residues; that stretch reads LHHHRHTGSQSKSKMKR.

The protein belongs to the SPT20 family. Interacts with MAPK14. Interacts with ATG9A. Highly expressed in testis, moderately in brain and pituitary gland. Expressed in several fetal tissues, including lung, brain, thymus and kidney. Expression is down-regulated in malignant prostate tissues.

The protein localises to the nucleus. Its function is as follows. Required for MAP kinase p38 (MAPK11, MAPK12, MAPK13 and/or MAPK14) activation during gastrulation. Required for down-regulation of E-cadherin during gastrulation by regulating E-cadherin protein level downstream from NCK-interacting kinase (NIK) and independently of the regulation of transcription by FGF signaling and Snail. Required for starvation-induced ATG9A trafficking during autophagy. This is Transcription factor SPT20 homolog (SUPT20H) from Homo sapiens (Human).